A 551-amino-acid chain; its full sequence is Membrane protein insertase YidC (551 aa).

A helical membrane pass occupies residues 3–23 (ANHIRILLLVTIAIMFISLMG). The span at 33–47 (NTKQQTSATQNNSHY) shows a compositional bias: polar residues. Residues 33-59 (NTKQQTSATQNNSHYDNADSSTNTDVT) form a disordered region. A compositionally biased stretch (low complexity) spans 50 to 59 (ADSSTNTDVT). A run of 3 helical transmembrane segments spans residues 361-381 (LVGNWGLAIILVTCLIKLIFY), 431-451 (LSGCLPMLIQIPIFISLYWVL), and 504-524 (VMMFLPVIFTFLFASFPSGLV).

It belongs to the OXA1/ALB3/YidC family. Type 1 subfamily. As to quaternary structure, interacts with the Sec translocase complex via SecD. Specifically interacts with transmembrane segments of nascent integral membrane proteins during membrane integration.

It is found in the cell inner membrane. In terms of biological role, required for the insertion and/or proper folding and/or complex formation of integral membrane proteins into the membrane. Involved in integration of membrane proteins that insert both dependently and independently of the Sec translocase complex, as well as at least some lipoproteins. Aids folding of multispanning membrane proteins. The protein is Membrane protein insertase YidC of Francisella tularensis subsp. tularensis (strain SCHU S4 / Schu 4).